Here is a 234-residue protein sequence, read N- to C-terminus: Peptidase E (234 aa).

Residues serine 123, aspartate 138, and histidine 160 each act as charge relay system in the active site.

It belongs to the peptidase S51 family.

Its subcellular location is the cytoplasm. It carries out the reaction Dipeptidase E catalyzes the hydrolysis of dipeptides Asp-|-Xaa. It does not act on peptides with N-terminal Glu, Asn or Gln, nor does it cleave isoaspartyl peptides.. In terms of biological role, hydrolyzes dipeptides containing N-terminal aspartate residues. May play a role in allowing the cell to use peptide aspartate to spare carbon otherwise required for the synthesis of the aspartate family of amino acids. The protein is Peptidase E of Actinobacillus pleuropneumoniae serotype 7 (strain AP76).